Here is a 395-residue protein sequence, read N- to C-terminus: Neuromedin-U receptor 2 (395 aa).

At 1–41 the chain is on the extracellular side; the sequence is MGKLENASWIHDSLMKYLNSTEEYLAYLCGPKRSDLSLPVS. 2 N-linked (GlcNAc...) asparagine glycosylation sites follow: Asn6 and Asn19. A helical transmembrane segment spans residues 42–62; the sequence is VVYALIFVVGVIGNLLVCLVI. Over 63–74 the chain is Cytoplasmic; sequence ARHQTLKTPTNY. The chain crosses the membrane as a helical span at residues 75 to 95; sequence YLFSLAVSDLLVLLLGMPLEV. The Extracellular portion of the chain corresponds to 96-115; sequence YELWHNYPFLFGPVGCYFKT. Cys111 and Cys196 are joined by a disulfide. A helical transmembrane segment spans residues 116 to 138; the sequence is ALFETVCFASILSVTTVSIERYV. Residues 139–157 lie on the Cytoplasmic side of the membrane; sequence AIVHPFRAKLESTRRRALR. The chain crosses the membrane as a helical span at residues 158–178; the sequence is ILSLVWSFSVVFSLPNTSIHG. Topologically, residues 179–212 are extracellular; it reads IKFQQFPNGSSVPGSATCTVTKPIWVYNFIIQAT. An N-linked (GlcNAc...) asparagine glycan is attached at Asn186. The chain crosses the membrane as a helical span at residues 213 to 233; the sequence is SFLFYILPMTLISVLYYLMGL. Over 234-257 the chain is Cytoplasmic; sequence RLKRDESLEADKVTVNIHRPSRKS. The chain crosses the membrane as a helical span at residues 258–278; it reads VTKMLFVLVLVFAICWTPFHV. The Extracellular portion of the chain corresponds to 279-293; the sequence is DRLFFSFVDEWTESL. The chain crosses the membrane as a helical span at residues 294 to 314; it reads AAVFNLIHVVSGVFFYLSSAV. Topologically, residues 315-395 are cytoplasmic; that stretch reads NPIIYNLLSR…TTVPCVEEVP (81 aa).

Belongs to the G-protein coupled receptor 1 family. Expressed primarily in brain tissues, more specifically in medulla and spinal cord. Widespread distribution in peripheral tissues.

Its subcellular location is the cell membrane. Its function is as follows. Receptor for the neuromedin-U and neuromedin-S neuropeptides. The polypeptide is Neuromedin-U receptor 2 (Nmur2) (Mus musculus (Mouse)).